Reading from the N-terminus, the 328-residue chain is D-cysteine desulfhydrase (328 aa).

Residue Lys-51 is modified to N6-(pyridoxal phosphate)lysine.

The protein belongs to the ACC deaminase/D-cysteine desulfhydrase family. Homodimer. Requires pyridoxal 5'-phosphate as cofactor.

It carries out the reaction D-cysteine + H2O = hydrogen sulfide + pyruvate + NH4(+) + H(+). Its function is as follows. Catalyzes the alpha,beta-elimination reaction of D-cysteine and of several D-cysteine derivatives. It could be a defense mechanism against D-cysteine. This is D-cysteine desulfhydrase from Escherichia coli O157:H7.